Consider the following 219-residue polypeptide: Transmembrane emp24 domain-containing protein 10 (219 aa).

Residues Met-1–Ala-31 form the signal peptide. A required for interaction with STX17 region spans residues Met-1–Glu-142. The Lumenal portion of the chain corresponds to Ile-32–Arg-185. A GOLD domain is found at Arg-41 to Ser-193. Residues Leu-147–Thr-178 are required for TMED10 and TMED2 cis-Golgi network localization. Residues Arg-171 and Arg-176 each carry the dimethylated arginine modification. A glycan (N-linked (GlcNAc...) asparagine) is linked at Asn-179. The chain crosses the membrane as a helical span at residues Val-186–Phe-206. Positions Gln-204–Glu-219 are interaction with COPG1. Over Tyr-207–Glu-219 the chain is Cytoplasmic. Positions Tyr-207–Glu-219 are interaction with ARF1 and IL1B. The short motif at Phe-211–Phe-212 is the COPII vesicle coat-binding element. Residues Phe-211–Glu-219 carry the COPI vesicle coat-binding motif.

It belongs to the EMP24/GP25L family. In terms of assembly, predominantly dimeric and to a lesser extent monomeric in the ER. Monomer and dimer in ERGIC and cis-Golgi network. Forms homooligomer (via GOLD domain); the assembly is promoted by direct binding with leaderless cargos and may form a protein channel that facilitates cargo entry into the ERGIC. Forms heterooligomeric complexes with other members of the p24 family such as TMED2, TMED7 and TMED9. Interacts (via GOLD domain) with TMED2 (via GOLD domain); the complex is required for export of TMED10 from the ER to the cis-Golgi network; the complex is proposed to be involved in cis-Golgi network dynamics and / or biogenesis. Associates with the COPI vesicle coat subunits (coatomer). Tetramerization of the cytoplasmic domain at the Golgi membrane in vitro; the complex is proposed to interact with COPI coatomer and induce budding of the vesicles. Interacts with COPG1; the interaction involves TMED10 homodimer. Interacts with ARF1 (GDP-bound); the interaction probably involves a TMED10 oligomer. Interacts with SEC23A, SEC24B, SEC24C and SEC24D components of the coat protein complex II/COPII, indicative of an association of TMED10 with the COPII vesicle coat. Interacts with CD59. Interacts with MPPE1/PGAP5; the complex might recruit and sort GPI-anchored proteins to the ER-exit site, or the interaction might lead to recycling of PGAP5 between the ER and the Golgi. Interacts with F2LR1/PAR2. Interacts with KDELR2/ERD2; the interaction is disrupted by KDELR2 ligand. Found in a complex composed at least of SURF4, TMED2 and TMED10. Associates with the presenilin-dependent gamma-secretase complex. Interacts with STX17; the interaction is direct. Interacts with IL-1; the interaction is direct. Interacts with RAB21 (active GTP-bound form); the interaction is indirect and regulates TMED10 abundance and localization at the Golgi.

It is found in the endoplasmic reticulum membrane. The protein resides in the endoplasmic reticulum-Golgi intermediate compartment membrane. Its subcellular location is the golgi apparatus membrane. The protein localises to the golgi apparatus. It localises to the cis-Golgi network membrane. It is found in the trans-Golgi network membrane. The protein resides in the cytoplasmic vesicle. Its subcellular location is the secretory vesicle membrane. The protein localises to the cell membrane. It localises to the melanosome. Functionally, cargo receptor involved in protein vesicular trafficking and quality control in the endoplasmic reticulum (ER) and Golgi. The p24 protein family is a group of transmembrane proteins that bind coat protein complex I/COPI and coat protein complex II/COPII involved in vesicular trafficking between the membranes. Acts at the lumenal side for incorporation of secretory cargo molecules into transport vesicles and involved in vesicle coat formation at the cytoplasmic side. Mainly functions in the early secretory pathway and cycles between the ER, ER-Golgi intermediate compartment (ERGIC) and Golgi, mediating cargo transport through COPI and COPII-coated vesicles. In COPII vesicle-mediated anterograde transport, involved in the transport of GPI-anchored proteins by acting together with TMED2 as their cargo receptor; the function specifically implies SEC24C and SEC24D of the COPII vesicle coat and lipid raft-like microdomains of the ER. Recognizes GPI anchors structural remodeled in the ER by the GPI inositol-deacylase/PGAP1 and the metallophosphoesterase MPPE1/PGAP5. In COPI vesicle-mediated retrograde transport, involved in the biogenesis of COPI vesicles and vesicle coat recruitment. Involved in trafficking of amyloid beta A4 protein and soluble APP-beta release (independent from the modulation of gamma-secretase activity). Involved in the KDELR2-mediated retrograde transport of the toxin A subunit (CTX-A-K63)together with COPI and the COOH terminus of KDELR2. On Golgi membranes, acts as a primary receptor for ARF1-GDP, a GTP-binding protein involved in COPI-vesicle formation. Increases coatomer-dependent GTPase-activating activity of ARFGAP2 which mediates the hydrolysis of ARF1-bound GTP and therefore modulates protein trafficking from the Golgi apparatus. Involved in the exocytic trafficking of G protein-coupled receptors F2LR1/PAR2 (trypsin and tryspin-like enzyme receptor), OPRM1 (opioid receptor) and P2RY4 (UTD and UDP receptor) from the Golgi to the plasma membrane, thus contributing to receptor resensitization. In addition to its cargo receptor activity, may also act as a protein channel after oligomerization, facilitating the post-translational entry of leaderless cytoplasmic cargo into the ERGIC. Involved in the translocation into ERGIC, the vesicle entry and the secretion of leaderless cargos (lacking the secretion signal sequence), including the mature form of interleukin 1/IL-1 family members, the alpha-crystallin B chain HSPB5, the carbohydrate-binding proteins galectin-1/LGALS1 and galectin-3/LGALS3, the microtubule-associated protein Tau/MAPT, and the annexin A1/ANXA1; the translocation process is dependent on cargo protein unfolding and enhanced by chaperones HSP90AB1 and HSP90B1/GRP9. Could also associates with the presenilin-dependent gamma-secretase complex in order to regulate gamma-cleavages of the amyloid beta A4 protein to yield amyloid-beta 40/Abeta40. The polypeptide is Transmembrane emp24 domain-containing protein 10 (TMED10) (Oryctolagus cuniculus (Rabbit)).